Consider the following 729-residue polypeptide: Probable ATP-dependent RNA helicase DDX4 (729 aa).

Residues 22 to 246 (FEKDRYSSGA…ESGDTQGPKV (225 aa)) form a disordered region. Positions 29 to 45 (SGANGDTFNRTPASSSE) are enriched in polar residues. The segment covering 71-80 (DPGESNKREN) has biased composition (basic and acidic residues). Composition is skewed to gly residues over residues 152–164 (RGSF…GFGR) and 204–214 (SGGGSGRGGYK). A phosphoserine mark is found at Ser224 and Ser228. Positions 230–249 (KSEAEGGESGDTQGPKVTYI) are interaction with RANBP9. The Q motif signature appears at 290-318 (LTFEEANLCQTLNNNIAKAGYTKLTPVQK). The 184-residue stretch at 321-504 (IPIIQGGRDL…GEFLKSNYLF (184 aa)) folds into the Helicase ATP-binding domain. 334-341 (AQTGSGKT) serves as a coordination point for ATP. Positions 448–451 (DEAD) match the DEAD box motif. Residues 532–677 (KLVEILRNIG…DVPAWLEEIA (146 aa)) enclose the Helicase C-terminal domain. A compositionally biased stretch (polar residues) spans 706 to 720 (KSSLNTAGFSSTQAP). Positions 706 to 729 (KSSLNTAGFSSTQAPNPVDDESWD) are disordered. Ser727 carries the phosphoserine modification.

This sequence belongs to the DEAD box helicase family. DDX4/VASA subfamily. In terms of assembly, found in a mRNP complex, at least composed of TDRD1, TDRD6, TDRD7 and DDX4. Interacts with RANBP9. Interacts with RANBP10. Interacts with PIWIL2 and MAEL. Interacts with BMAL1 and CLOCK. Interacts with Tex19.1 and, probably, Tex19.2. Interacts with RBM46.

Its subcellular location is the cytoplasm. The protein resides in the perinuclear region. The catalysed reaction is ATP + H2O = ADP + phosphate + H(+). ATP-dependent RNA helicase required during spermatogenesis to repress transposable elements and preventing their mobilization, which is essential for the germline integrity. Acts via the piRNA metabolic process, which mediates the repression of transposable elements during meiosis by forming complexes composed of piRNAs and Piwi proteins and governs the methylation and subsequent repression of transposons. Involved in the secondary piRNAs metabolic process, the production of piRNAs in fetal male germ cells through a ping-pong amplification cycle. Required for PIWIL2 slicing-triggered piRNA biogenesis: helicase activity enables utilization of one of the slice cleavage fragments generated by PIWIL2 and processing these pre-piRNAs into piRNAs. The sequence is that of Probable ATP-dependent RNA helicase DDX4 (DDX4) from Bos taurus (Bovine).